The chain runs to 239 residues: Enolase-phosphatase E1 (239 aa).

Positions 13 and 15 each coordinate Mg(2+). Substrate-binding positions include 133–134 (SS) and K170. D196 contributes to the Mg(2+) binding site.

Belongs to the HAD-like hydrolase superfamily. MasA/MtnC family. As to quaternary structure, monomer. Requires Mg(2+) as cofactor.

It is found in the cytoplasm. The protein resides in the nucleus. The catalysed reaction is 5-methylsulfanyl-2,3-dioxopentyl phosphate + H2O = 1,2-dihydroxy-5-(methylsulfanyl)pent-1-en-3-one + phosphate. The protein operates within amino-acid biosynthesis; L-methionine biosynthesis via salvage pathway; L-methionine from S-methyl-5-thio-alpha-D-ribose 1-phosphate: step 3/6. Its pathway is amino-acid biosynthesis; L-methionine biosynthesis via salvage pathway; L-methionine from S-methyl-5-thio-alpha-D-ribose 1-phosphate: step 4/6. Functionally, bifunctional enzyme that catalyzes the enolization of 2,3-diketo-5-methylthiopentyl-1-phosphate (DK-MTP-1-P) into the intermediate 2-hydroxy-3-keto-5-methylthiopentenyl-1-phosphate (HK-MTPenyl-1-P), which is then dephosphorylated to form the acireductone 1,2-dihydroxy-3-keto-5-methylthiopentene (DHK-MTPene). The chain is Enolase-phosphatase E1 from Chaetomium globosum (strain ATCC 6205 / CBS 148.51 / DSM 1962 / NBRC 6347 / NRRL 1970) (Soil fungus).